Reading from the N-terminus, the 591-residue chain is MNQGKIITVSGPLVVASGMQEANIQDICRVGHLGLVGEIIEMRRDQASIQVYEETSGIGPGEPVVTTGCPLSVELGPGLISEMFDGIQRPLDRFQKATDSDFLIRGVAIPSLDRKAKWAFIPKLSVGQEVVAGDILGTVQETAVIEHRIMVPYKVSGTLVAIHAGDFTVTDTVYEIKQEDGSIYQGSLMQTWPVRQSRPVAQKLIPVEPLVTGQRVIDTFFPVTKGGAAAVPGPFGAGKTVVQHQIAKFANVDIVIYVGCGERGNEMTDVLNEFPELIDPNTGQSIMERTVLIANTSNMPVAAREASIYTGITIAEYFRDMGYSVAIMADSTSRWAEALREMSGRLQEMPGDEGYPAYLGSRIAEYYERAGRVRTLGSQEREGTITAIGAVSPPGGDISEPVTQNTLRIVKVFWGLDAPLAQRRHFPAINWLTSYSLYQDDVGSYIDRKQQSNWSNKVTRAMAILQREASLEEIVRLVGLDSLSEQDRLTMAVARQIREDYLQQNAFDSVDTFTSFPKQEAMLTNILTFNEEASKALSLGAYFNEIMEGTAQVRDRIARSKFIPEENLEQIKGLTQKVTKEIHHVLAKGGI.

ATP is bound at residue 233–240 (GPFGAGKT).

This sequence belongs to the ATPase alpha/beta chains family.

The enzyme catalyses ATP + H2O + 4 H(+)(in) = ADP + phosphate + 5 H(+)(out). In terms of biological role, produces ATP from ADP in the presence of a proton gradient across the membrane. The V-type alpha chain is a catalytic subunit. This chain is V-type ATP synthase alpha chain, found in Streptococcus pyogenes serotype M1.